Reading from the N-terminus, the 443-residue chain is MKVMKWSAIALAVSAGSTQFAVADAFVSDQAEAKGFIEDSSLDLLLRNYYFNRDGKSGSGDRVDWTQGFLTTYESGFTQGTVGFGVDAFGYLGLKLDGTSDKTGTGNLPVMNDGKPRDDYSRAGGAVKVRISKTMLKWGEMQPTAPVFAAGGSRLFPQTATGFQLQSSEFEGLDLEAGHFTEGKEPTTVKSRGELYATYAGETAKSADFIGGRYAITDNLSASLYGAELEDIYRQYYLNSNYTIPLASDQSLGFDFNIYRTNDEGKAKAGDISNTTWSLAAAYTLDAHTFTLAYQKVHGDQPFDYIGFGRNGSGAGGDSIFLANSVQYSDFNGPGEKSWQARYDLNLASYGVPGLTFMVRYINGKDIDGTKMSDNNVGYKNYGYGEDGKHHETNLEAKYVVQSGPAKDLSFRIRQAWHRANADQGEGDQNEFRLIVDYPLSIL.

Residues 1 to 23 (MKVMKWSAIALAVSAGSTQFAVA) form the signal peptide. Residues histidine 179, aspartate 231, and serine 319 contribute to the active site.

It belongs to the outer membrane porin (Opr) (TC 1.B.25) family.

It is found in the cell outer membrane. Functionally, porin with a specificity for basic amino acids. Involved in facilitated diffusion of carbapenem beta-lactam antibiotics, such as imipenem and meropenem. Also possesses serine protease activity. The chain is Porin D (oprD) from Pseudomonas aeruginosa (strain ATCC 15692 / DSM 22644 / CIP 104116 / JCM 14847 / LMG 12228 / 1C / PRS 101 / PAO1).